We begin with the raw amino-acid sequence, 410 residues long: Ribosomal protein S6 kinase-related protein (410 aa).

A Protein kinase domain is found at 107 to 274; sequence LKILGLVAKG…GTLQYMAPEV (168 aa). ATP-binding positions include 113–121 and lysine 136; that span reads VAKGSFGTV. The active-site Proton acceptor is the aspartate 229.

It belongs to the protein kinase superfamily. Ser/Thr protein kinase family.

It catalyses the reaction L-seryl-[protein] + ATP = O-phospho-L-seryl-[protein] + ADP + H(+). It carries out the reaction L-threonyl-[protein] + ATP = O-phospho-L-threonyl-[protein] + ADP + H(+). The polypeptide is Ribosomal protein S6 kinase-related protein (Homo sapiens (Human)).